Here is a 196-residue protein sequence, read N- to C-terminus: C-type lectin domain family 3 member A (196 aa).

The N-terminal stretch at 1-22 (MAKNGLVLCILVVSLLLDQTDG) is a signal peptide. Disulfide bonds link C68–C78, C95–C191, and C167–C183. The 119-residue stretch at 74-192 (VHKKCYLASE…CRSSKRYICE (119 aa)) folds into the C-type lectin domain.

It localises to the secreted. Functionally, promotes cell adhesion to laminin and fibronectin. The polypeptide is C-type lectin domain family 3 member A (Clec3a) (Mus musculus (Mouse)).